The sequence spans 350 residues: Thymidine kinase (350 aa).

Position 17-24 (17-24) interacts with ATP; the sequence is GPFGIGKT. Residue E45 is the Proton acceptor of the active site. Substrate is bound at residue Q86. ATP is bound at residue R176. R182 lines the substrate pocket.

Belongs to the herpesviridae thymidine kinase family. In terms of assembly, homodimer.

It carries out the reaction thymidine + ATP = dTMP + ADP + H(+). Catalyzes the transfer of the gamma-phospho group of ATP to thymidine to generate dTMP in the salvage pathway of pyrimidine synthesis. The dTMP serves as a substrate for DNA polymerase during viral DNA replication. Allows the virus to be reactivated and to grow in non-proliferative cells lacking a high concentration of phosphorylated nucleic acid precursors. This is Thymidine kinase from Gallus gallus (Chicken).